The following is a 369-amino-acid chain: Phenylalanine--tRNA ligase alpha subunit (369 aa).

Glu269 lines the Mg(2+) pocket.

The protein belongs to the class-II aminoacyl-tRNA synthetase family. Phe-tRNA synthetase alpha subunit type 1 subfamily. In terms of assembly, tetramer of two alpha and two beta subunits. Mg(2+) is required as a cofactor.

Its subcellular location is the cytoplasm. The catalysed reaction is tRNA(Phe) + L-phenylalanine + ATP = L-phenylalanyl-tRNA(Phe) + AMP + diphosphate + H(+). The protein is Phenylalanine--tRNA ligase alpha subunit of Brucella canis (strain ATCC 23365 / NCTC 10854 / RM-666).